A 146-amino-acid chain; its full sequence is Hut operon positive regulatory protein (146 aa).

The protein belongs to the HutP family. Homohexamer.

Antiterminator that binds to cis-acting regulatory sequences on the mRNA in the presence of histidine, thereby suppressing transcription termination and activating the hut operon for histidine utilization. In Bacillus cereus (strain ZK / E33L), this protein is Hut operon positive regulatory protein.